We begin with the raw amino-acid sequence, 377 residues long: Adaptive-response sensory kinase SasA (377 aa).

The Histidine kinase domain occupies 154–373; it reads MLVHDLRSPL…SFHFTLPVYR (220 aa). His-157 is modified (phosphohistidine; by autocatalysis).

In terms of assembly, homooligomerizes. Interacts with KaiC. Participates in the KaiABC clock complex, whose core is composed of a KaiC homohexamer, 6 KaiB and up to 6 KaiA dimers. SasA and KaiB(fs) compete to bind to KaiC.

It catalyses the reaction ATP + protein L-histidine = ADP + protein N-phospho-L-histidine.. Functionally, member of the two-component regulatory system SasA/RpaA involved in genome-wide circadian gene expression. One of several clock output pathways. Participates in the Kai clock protein complex, the main circadian regulator in cyanobacteria, via its interaction with KaiC. KaiC enhances the autophosphorylation activity of SasA, which then transfers its phosphate group to RpaA to activate it. In addition to its output function, recruits fold-shifted KaiB (KaiB(fs)) to KaiC to cooperatively form the KaiB(6):KaiC(6) complex (independent of SasA kinase activity). Required for robustness of the circadian rhythm of gene expression and is involved in clock output, also required for adaptation to light/dark cycles. In Synechococcus sp. (strain JA-2-3B'a(2-13)) (Cyanobacteria bacterium Yellowstone B-Prime), this protein is Adaptive-response sensory kinase SasA.